Reading from the N-terminus, the 494-residue chain is Guanosine-5'-triphosphate,3'-diphosphate pyrophosphatase (494 aa).

The protein belongs to the GppA/Ppx family. GppA subfamily.

It catalyses the reaction guanosine 3'-diphosphate 5'-triphosphate + H2O = guanosine 3',5'-bis(diphosphate) + phosphate + H(+). Its pathway is purine metabolism; ppGpp biosynthesis; ppGpp from GTP: step 2/2. Functionally, catalyzes the conversion of pppGpp to ppGpp. Guanosine pentaphosphate (pppGpp) is a cytoplasmic signaling molecule which together with ppGpp controls the 'stringent response', an adaptive process that allows bacteria to respond to amino acid starvation, resulting in the coordinated regulation of numerous cellular activities. The chain is Guanosine-5'-triphosphate,3'-diphosphate pyrophosphatase from Escherichia coli O139:H28 (strain E24377A / ETEC).